We begin with the raw amino-acid sequence, 205 residues long: Probable GTP-binding protein EngB (205 aa).

One can recognise an EngB-type G domain in the interval 21-196 (QVPEVAFAGR…VHEVSKCVKE (176 aa)). Residues 29–36 (GRSNVGKS), 56–60 (GSTRQ), 74–77 (DLPG), 141–144 (TKID), and 172–177 (IIGTSS) contribute to the GTP site. 2 residues coordinate Mg(2+): serine 36 and threonine 58.

The protein belongs to the TRAFAC class TrmE-Era-EngA-EngB-Septin-like GTPase superfamily. EngB GTPase family. The cofactor is Mg(2+).

Functionally, necessary for normal cell division and for the maintenance of normal septation. The protein is Probable GTP-binding protein EngB of Anaplasma marginale (strain Florida).